Here is a 336-residue protein sequence, read N- to C-terminus: UDP-3-O-acylglucosamine N-acyltransferase (336 aa).

H233 acts as the Proton acceptor in catalysis.

This sequence belongs to the transferase hexapeptide repeat family. LpxD subfamily. In terms of assembly, homotrimer.

The enzyme catalyses a UDP-3-O-[(3R)-3-hydroxyacyl]-alpha-D-glucosamine + a (3R)-hydroxyacyl-[ACP] = a UDP-2-N,3-O-bis[(3R)-3-hydroxyacyl]-alpha-D-glucosamine + holo-[ACP] + H(+). The protein operates within bacterial outer membrane biogenesis; LPS lipid A biosynthesis. Functionally, catalyzes the N-acylation of UDP-3-O-acylglucosamine using 3-hydroxyacyl-ACP as the acyl donor. Is involved in the biosynthesis of lipid A, a phosphorylated glycolipid that anchors the lipopolysaccharide to the outer membrane of the cell. The protein is UDP-3-O-acylglucosamine N-acyltransferase of Helicobacter pylori (strain J99 / ATCC 700824) (Campylobacter pylori J99).